We begin with the raw amino-acid sequence, 247 residues long: Homeobox-leucine zipper protein HOX17 (247 aa).

Residues E58–R81 form a disordered region. The homeobox DNA-binding region spans G79–Q138. The leucine-zipper stretch occupies residues K137–S182.

Belongs to the HD-ZIP homeobox family. Class II subfamily. In terms of tissue distribution, expressed in seedlings, roots, stems, leaf sheaths and blades and panicles.

The protein resides in the nucleus. In terms of biological role, probable transcription factor. The sequence is that of Homeobox-leucine zipper protein HOX17 (HOX17) from Oryza sativa subsp. japonica (Rice).